A 381-amino-acid chain; its full sequence is CD2 homolog (381 aa).

Positions 1-16 are cleaved as a signal peptide; that stretch reads MIIKLIFLICFKIVLS. Residues 17–208 lie on the Extracellular side of the membrane; the sequence is INYWVRYNDT…QNYFLENIHT (192 aa). N-linked (GlcNAc...) asparagine; by host glycosylation is found at Asn24, Asn73, Asn77, Asn85, Asn91, Asn104, Asn121, Asn133, Asn144, Asn176, Asn183, and Asn189. Cystine bridges form between Cys122–Cys190 and Cys129–Cys173. A helical transmembrane segment spans residues 209-229; sequence LFYMIIFIVSGITISIFISII. At 230 to 381 the chain is on the cytoplasmic side; it reads TFLSLRKRKK…ISLIHVDRII (152 aa). Residues 243-278 are disordered; it reads EIESPPPESNEEEQCQHDDTTSIHEPSPREPLLPKP. Basic and acidic residues predominate over residues 256–270; it reads QCQHDDTTSIHEPSP. 7 repeat units span residues 305–310, 311–316, 317–322, 323–328, 329–334, 335–340, and 341–346. Residues 305-334 are 7 X 6 AA tandem repeats of K-[LP]-C-[PRS]-[PS]-[PS]; sequence KPCPPPKPCPPPKPCPPPKPCPPPKPCPPP. The disordered stretch occupies residues 341 to 362; the sequence is KPCPPPESYSPPKPLPSIPLLP.

The protein belongs to the asfivirus CD2 homolog protein family. As to quaternary structure, both glycosylated and nonglycosylated forms interact (via C-terminus) with the host AP-1 complex. Post-translationally, cleaved into two fragments of 63 kDa and 26 kDa containing respectively the glycosylated N-terminus and the nonglycosylated C-terminus. A full-length 89-kDa glycosylated form also exists.

It is found in the host membrane. Its subcellular location is the virion membrane. The protein localises to the host Golgi apparatus. May play an immunosuppressive role by inhibiting lymphocyte proliferation and subsequently facilitating viral replication and generalization of infection. Responsible for viral hemadsorption, which may help viral spread. Increases virus replication in the tick vector at the step of virus uptake or replication in the tick gut. May play a role in the host Golgi reorganization to yield viral factories. May play a role in host cell penetration. The protein is CD2 homolog of African swine fever virus (isolate Warthog/Namibia/Wart80/1980) (ASFV).